The primary structure comprises 204 residues: Protein GrpE (204 aa).

Composition is skewed to basic and acidic residues over residues 1-21 (MEELEKDKIERNEEMSEEVKG) and 36-46 (EEKIETEVEQK). Residues 1-46 (MEELEKDKIERNEEMSEEVKGEGPPSELEQSEEVVEEKIETEVEQK) are disordered.

The protein belongs to the GrpE family. As to quaternary structure, homodimer.

It localises to the cytoplasm. Participates actively in the response to hyperosmotic and heat shock by preventing the aggregation of stress-denatured proteins, in association with DnaK and GrpE. It is the nucleotide exchange factor for DnaK and may function as a thermosensor. Unfolded proteins bind initially to DnaJ; upon interaction with the DnaJ-bound protein, DnaK hydrolyzes its bound ATP, resulting in the formation of a stable complex. GrpE releases ADP from DnaK; ATP binding to DnaK triggers the release of the substrate protein, thus completing the reaction cycle. Several rounds of ATP-dependent interactions between DnaJ, DnaK and GrpE are required for fully efficient folding. The protein is Protein GrpE of Caldanaerobacter subterraneus subsp. tengcongensis (strain DSM 15242 / JCM 11007 / NBRC 100824 / MB4) (Thermoanaerobacter tengcongensis).